A 517-amino-acid polypeptide reads, in one-letter code: NEDD8-activating enzyme E1 regulatory subunit (517 aa).

It belongs to the ubiquitin-activating E1 family. ULA1 subfamily. As to quaternary structure, heterodimer of uba3 and ula1. The complex binds NEDD8/ubl1 and ubc12.

The protein localises to the cytoplasm. The protein resides in the nucleus. Its pathway is protein modification; protein neddylation. Regulatory subunit of the dimeric uba3-ula1 E1 enzyme. E1 activates NEDD8/ubl1 by first adenylating its C-terminal glycine residue with ATP, thereafter linking this residue to the side chain of the catalytic cysteine, yielding a NEDD8-UBA3 thioester and free AMP. E1 finally transfers NEDD8 to the catalytic cysteine of ubc12. This Schizosaccharomyces pombe (strain 972 / ATCC 24843) (Fission yeast) protein is NEDD8-activating enzyme E1 regulatory subunit (uba5).